The following is a 96-amino-acid chain: Large ribosomal subunit protein uL23 (96 aa).

The protein belongs to the universal ribosomal protein uL23 family. Part of the 50S ribosomal subunit. Contacts protein L29, and trigger factor when it is bound to the ribosome.

In terms of biological role, one of the early assembly proteins it binds 23S rRNA. One of the proteins that surrounds the polypeptide exit tunnel on the outside of the ribosome. Forms the main docking site for trigger factor binding to the ribosome. The polypeptide is Large ribosomal subunit protein uL23 (Bacillus cereus (strain ATCC 10987 / NRS 248)).